Here is a 310-residue protein sequence, read N- to C-terminus: UDP-N-acetylenolpyruvoylglucosamine reductase (310 aa).

Positions 35 to 199 constitute an FAD-binding PCMH-type domain; sequence VGGPAQALFT…TSARFRGTPA (165 aa). Arg-179 is an active-site residue. Ser-228 functions as the Proton donor in the catalytic mechanism. Glu-298 is an active-site residue.

It belongs to the MurB family. It depends on FAD as a cofactor.

It is found in the cytoplasm. The catalysed reaction is UDP-N-acetyl-alpha-D-muramate + NADP(+) = UDP-N-acetyl-3-O-(1-carboxyvinyl)-alpha-D-glucosamine + NADPH + H(+). The protein operates within cell wall biogenesis; peptidoglycan biosynthesis. Functionally, cell wall formation. The sequence is that of UDP-N-acetylenolpyruvoylglucosamine reductase from Rhodopseudomonas palustris (strain BisB5).